Consider the following 282-residue polypeptide: U1 small nuclear ribonucleoprotein A (282 aa).

Residue A2 is modified to N-acetylalanine. Positions 10–89 (HTIYINNLNE…KPMRIQYAKT (80 aa)) constitute an RRM 1 domain. K60 is subject to N6-acetyllysine. Residues 101–141 (FVERDRKREKRKPKSQETPAAKKAVQGGAAAPVVGTVQGPV) form a disordered region. Positions 119 to 141 (PAAKKAVQGGAAAPVVGTVQGPV) are enriched in low complexity. Residue R152 is modified to Omega-N-methylarginine. One can recognise an RRM 2 domain in the interval 208–282 (HILFLTNLPE…NAMKISFAKK (75 aa)).

This sequence belongs to the RRM U1 A/B'' family. As to quaternary structure, U1 snRNP is composed of the 7 core Sm proteins SNRPB, SNRPD1, SNRPD2, SNRPD3, SNRPE, SNRPF and SNRPG that assemble in a heptameric protein ring on the Sm site of the small nuclear RNA to form the core snRNP, and at least three U1 snRNP-specific proteins SNRNP70/U1-70K, SNRPA/U1-A and SNRPC/U1-C. Interacts with SFPQ; component of a snRNP-free complex with SFPQ.

The protein resides in the nucleus. Its function is as follows. Component of the spliceosomal U1 snRNP, which is essential for recognition of the pre-mRNA 5' splice-site and the subsequent assembly of the spliceosome. U1 snRNP is the first snRNP to interact with pre-mRNA. This interaction is required for the subsequent binding of U2 snRNP and the U4/U6/U5 tri-snRNP. SNRPA binds stem loop II of U1 snRNA. In a snRNP-free form (SF-A) may be involved in coupled pre-mRNA splicing and polyadenylation process. May bind preferentially to the 5'-UGCAC-3' motif on RNAs. The protein is U1 small nuclear ribonucleoprotein A (SNRPA) of Bos taurus (Bovine).